The primary structure comprises 261 residues: Probable cyclic nucleotide phosphodiesterase PSM_A2567 (261 aa).

Residues Asp-22, His-24, Asp-62, Asn-94, His-160, His-198, and His-200 each coordinate Fe cation. Residues His-24, Asp-62, and 94–95 (NH) contribute to the AMP site. His-200 lines the AMP pocket.

The protein belongs to the cyclic nucleotide phosphodiesterase class-III family. The cofactor is Fe(2+).

The chain is Probable cyclic nucleotide phosphodiesterase PSM_A2567 from Pseudoalteromonas sp. (strain SM9913).